Consider the following 117-residue polypeptide: Peptidyl-tRNA hydrolase (117 aa).

The protein belongs to the PTH2 family.

Its subcellular location is the cytoplasm. The enzyme catalyses an N-acyl-L-alpha-aminoacyl-tRNA + H2O = an N-acyl-L-amino acid + a tRNA + H(+). Functionally, the natural substrate for this enzyme may be peptidyl-tRNAs which drop off the ribosome during protein synthesis. The polypeptide is Peptidyl-tRNA hydrolase (Thermoplasma acidophilum (strain ATCC 25905 / DSM 1728 / JCM 9062 / NBRC 15155 / AMRC-C165)).